The following is an 846-amino-acid chain: Aminopeptidase N (846 aa).

Substrate is bound by residues Glu120 and 252–256; that span reads GAMEN. His288 lines the Zn(2+) pocket. Glu289 serves as the catalytic Proton acceptor. 2 residues coordinate Zn(2+): His292 and Glu311.

This sequence belongs to the peptidase M1 family. Monomer. It depends on Zn(2+) as a cofactor.

It localises to the cytoplasm. It catalyses the reaction Release of an N-terminal amino acid, Xaa-|-Yaa- from a peptide, amide or arylamide. Xaa is preferably Ala, but may be most amino acids including Pro (slow action). When a terminal hydrophobic residue is followed by a prolyl residue, the two may be released as an intact Xaa-Pro dipeptide.. Functionally, aminopeptidase with broad substrate specificity to several peptides. It has more affinity for oligopeptides than for dipeptides. It plays an essential role in the metabolism, it may be involved in nitrogen supply or protein turnover. This chain is Aminopeptidase N (pepN), found in Lactococcus lactis subsp. cremoris (Streptococcus cremoris).